Reading from the N-terminus, the 468-residue chain is 6-phospho-beta-galactosidase (468 aa).

Residues Gln19, His116, Asn159, Glu160, and Asn297 each contribute to the D-galactose 6-phosphate site. Glu160 functions as the Proton donor in the catalytic mechanism. Glu375 (nucleophile) is an active-site residue. Positions 428, 429, 435, and 437 each coordinate D-galactose 6-phosphate.

This sequence belongs to the glycosyl hydrolase 1 family.

The enzyme catalyses a 6-phospho-beta-D-galactoside + H2O = D-galactose 6-phosphate + an alcohol. It participates in carbohydrate metabolism; lactose degradation; D-galactose 6-phosphate and beta-D-glucose from lactose 6-phosphate: step 1/1. This chain is 6-phospho-beta-galactosidase, found in Streptococcus agalactiae serotype III (strain NEM316).